A 544-amino-acid chain; its full sequence is Chaperonin GroEL 2 (544 aa).

Residues 29–32, K50, 86–90, G414, and D494 each bind ATP; these read TLGP and DGTTT.

The protein belongs to the chaperonin (HSP60) family. In terms of assembly, forms a cylinder of 14 subunits composed of two heptameric rings stacked back-to-back. Interacts with the co-chaperonin GroES.

The protein resides in the cytoplasm. The enzyme catalyses ATP + H2O + a folded polypeptide = ADP + phosphate + an unfolded polypeptide.. In terms of biological role, together with its co-chaperonin GroES, plays an essential role in assisting protein folding. The GroEL-GroES system forms a nano-cage that allows encapsulation of the non-native substrate proteins and provides a physical environment optimized to promote and accelerate protein folding. The polypeptide is Chaperonin GroEL 2 (Psychromonas ingrahamii (strain DSM 17664 / CCUG 51855 / 37)).